The sequence spans 199 residues: ATP-dependent Clp protease proteolytic subunit (199 aa).

The disordered stretch occupies residues Met-1–Ser-23. Catalysis depends on Ser-100, which acts as the Nucleophile. The active site involves His-125.

Belongs to the peptidase S14 family. Fourteen ClpP subunits assemble into 2 heptameric rings which stack back to back to give a disk-like structure with a central cavity, resembling the structure of eukaryotic proteasomes.

It localises to the cytoplasm. The enzyme catalyses Hydrolysis of proteins to small peptides in the presence of ATP and magnesium. alpha-casein is the usual test substrate. In the absence of ATP, only oligopeptides shorter than five residues are hydrolyzed (such as succinyl-Leu-Tyr-|-NHMec, and Leu-Tyr-Leu-|-Tyr-Trp, in which cleavage of the -Tyr-|-Leu- and -Tyr-|-Trp bonds also occurs).. Its function is as follows. Cleaves peptides in various proteins in a process that requires ATP hydrolysis. Has a chymotrypsin-like activity. Plays a major role in the degradation of misfolded proteins. In Paracoccus denitrificans, this protein is ATP-dependent Clp protease proteolytic subunit.